A 133-amino-acid polypeptide reads, in one-letter code: uncharacterized protein (133 aa).

An N-terminal signal peptide occupies residues 1–23 (MSRKIIPALTIFFGPILILTAIT). The disordered stretch occupies residues 82–133 (ESIKNQNSLNKEKQQQQQQQQQQQQQQQQQQQQQQKPNTPPTPLTTPSTPKK). Residues 96–118 (QQQQQQQQQQQQQQQQQQQQQKP) show a composition bias toward low complexity.

The protein resides in the secreted. This is an uncharacterized protein from Dictyostelium discoideum (Social amoeba).